A 412-amino-acid polypeptide reads, in one-letter code: Serine hydroxymethyltransferase (412 aa).

(6S)-5,6,7,8-tetrahydrofolate contacts are provided by residues Leu121 and 125 to 127 (GHL). Position 230 is an N6-(pyridoxal phosphate)lysine (Lys230). Residue 353–355 (TPF) participates in (6S)-5,6,7,8-tetrahydrofolate binding.

It belongs to the SHMT family. Homodimer. It depends on pyridoxal 5'-phosphate as a cofactor.

It localises to the cytoplasm. It carries out the reaction (6R)-5,10-methylene-5,6,7,8-tetrahydrofolate + glycine + H2O = (6S)-5,6,7,8-tetrahydrofolate + L-serine. It functions in the pathway one-carbon metabolism; tetrahydrofolate interconversion. The protein operates within amino-acid biosynthesis; glycine biosynthesis; glycine from L-serine: step 1/1. In terms of biological role, catalyzes the reversible interconversion of serine and glycine with tetrahydrofolate (THF) serving as the one-carbon carrier. This reaction serves as the major source of one-carbon groups required for the biosynthesis of purines, thymidylate, methionine, and other important biomolecules. Also exhibits THF-independent aldolase activity toward beta-hydroxyamino acids, producing glycine and aldehydes, via a retro-aldol mechanism. The polypeptide is Serine hydroxymethyltransferase (Finegoldia magna (strain ATCC 29328 / DSM 20472 / WAL 2508) (Peptostreptococcus magnus)).